We begin with the raw amino-acid sequence, 353 residues long: Histidinol-phosphate aminotransferase (353 aa).

Lys-211 bears the N6-(pyridoxal phosphate)lysine mark.

The protein belongs to the class-II pyridoxal-phosphate-dependent aminotransferase family. Histidinol-phosphate aminotransferase subfamily. In terms of assembly, homodimer. Pyridoxal 5'-phosphate is required as a cofactor.

The enzyme catalyses L-histidinol phosphate + 2-oxoglutarate = 3-(imidazol-4-yl)-2-oxopropyl phosphate + L-glutamate. It participates in amino-acid biosynthesis; L-histidine biosynthesis; L-histidine from 5-phospho-alpha-D-ribose 1-diphosphate: step 7/9. The chain is Histidinol-phosphate aminotransferase from Klebsiella pneumoniae (strain 342).